We begin with the raw amino-acid sequence, 195 residues long: MVVIYIMSNKQGLIILISGPSGVGKGTIVSRLLSDNNLKLNVSISATTRKKRASEVEGVHYFFKTKEEFEQMIANNQLLEYANYVNNYYGTPLSLVKEILDKNENLILEIEYQGVIQVLRKGFRTLSIFVLPPSEDELVARLKKRGTENDEVIKHRLEQAVKEYAHRELYDHTIINDDLEKTIEDIKQLILKYNQ.

The Guanylate kinase-like domain maps to 12–191 (GLIILISGPS…TIEDIKQLIL (180 aa)). Residue 19 to 26 (GPSGVGKG) coordinates ATP.

Belongs to the guanylate kinase family.

It localises to the cytoplasm. It catalyses the reaction GMP + ATP = GDP + ADP. In terms of biological role, essential for recycling GMP and indirectly, cGMP. The chain is Guanylate kinase (gmk) from Mycoplasmoides gallisepticum (strain R(low / passage 15 / clone 2)) (Mycoplasma gallisepticum).